Here is a 165-residue protein sequence, read N- to C-terminus: MMATYEGCYTDAQALRIAVVVARFNDLVTGKLLSGCLDCLARHGVDTSSNSEQLDVAWVPGAFELPIVTQTLALSGQYQVVITLGAVIRGDTPHFDVVVAEASKGIASVSRETGVPVIFGVLTTDTMQQALERAGIKSNLGWSYGLQALEMGSLMAVLRSATSAS.

Residues Phe-24, 62-64 (AFE), and 86-88 (AVI) contribute to the 5-amino-6-(D-ribitylamino)uracil site. 91-92 (DT) lines the (2S)-2-hydroxy-3-oxobutyl phosphate pocket. Residue His-94 is the Proton donor of the active site. Phe-119 is a 5-amino-6-(D-ribitylamino)uracil binding site. Arg-133 provides a ligand contact to (2S)-2-hydroxy-3-oxobutyl phosphate.

Belongs to the DMRL synthase family.

The enzyme catalyses (2S)-2-hydroxy-3-oxobutyl phosphate + 5-amino-6-(D-ribitylamino)uracil = 6,7-dimethyl-8-(1-D-ribityl)lumazine + phosphate + 2 H2O + H(+). It functions in the pathway cofactor biosynthesis; riboflavin biosynthesis; riboflavin from 2-hydroxy-3-oxobutyl phosphate and 5-amino-6-(D-ribitylamino)uracil: step 1/2. Its function is as follows. Catalyzes the formation of 6,7-dimethyl-8-ribityllumazine by condensation of 5-amino-6-(D-ribitylamino)uracil with 3,4-dihydroxy-2-butanone 4-phosphate. This is the penultimate step in the biosynthesis of riboflavin. This chain is 6,7-dimethyl-8-ribityllumazine synthase, found in Prochlorococcus marinus (strain MIT 9313).